Here is a 256-residue protein sequence, read N- to C-terminus: L-tyrosine degradation gene cluster protein hmgX (256 aa).

It belongs to the TTC36 family.

The protein localises to the cytoplasm. Its function is as follows. Part of the L-tyrosine degradation gene cluster that mediates the biosynthesis of the brownish pigment pyomelanin as an alternative melanin. The 4-hydroxyphenylpyruvate dioxygenase hppD catalyzes the conversion of 4-hydroxyphenylpyruvate to homogentisic acid (HGA). The protein hmgX is crucial for this conversion and thus, probably functions as an accessory factor to mediate specific activity of hppD. The homogentisate 1,2-dioxygenase hmgA is then involved in the cleavage of the aromatic ring of HGA and its conversion to 4-maleylacetoacetate. When hmgA activity is lowered by the cell wall integrity (CWI) signaling pathway, HGA accumulates and leads to the production of pyomelanin through benzoquinone acetic acid after oxidation and polymerization. On the opposite, in non-stress conditions, both hppD and hmgA activities are balanced and HGA is degraded into 4-maleylacetoacetate. 4-maleylacetoacetate is further converted to 4-fumarylacetoacetate by the maleylacetoacetate isomerase maiA, which is degraded into fumarate and acetoacetate by the fumarylacetoacetase fahA. This chain is L-tyrosine degradation gene cluster protein hmgX, found in Aspergillus fumigatus (strain ATCC MYA-4609 / CBS 101355 / FGSC A1100 / Af293) (Neosartorya fumigata).